Consider the following 84-residue polypeptide: uncharacterized protein (84 aa).

2 helical membrane passes run 7–27 (HVNF…ILCI) and 52–72 (ITII…INPC).

The protein localises to the membrane. This is an uncharacterized protein from Saccharomyces cerevisiae (strain ATCC 204508 / S288c) (Baker's yeast).